We begin with the raw amino-acid sequence, 159 residues long: Transcriptional repressor NrdR (159 aa).

Positions 1–22 (MRCPFCGSEDTQVKDSRPAEDN) are disordered. A zinc finger lies at 3–34 (CPFCGSEDTQVKDSRPAEDNTSIRRRRICPDC). Over residues 11 to 22 (TQVKDSRPAEDN) the composition is skewed to basic and acidic residues. Residues 49 to 139 (LMVIKKSGRK…VYRDFSHAED (91 aa)) form the ATP-cone domain.

The protein belongs to the NrdR family. The cofactor is Zn(2+).

Its function is as follows. Negatively regulates transcription of bacterial ribonucleotide reductase nrd genes and operons by binding to NrdR-boxes. In Agrobacterium fabrum (strain C58 / ATCC 33970) (Agrobacterium tumefaciens (strain C58)), this protein is Transcriptional repressor NrdR.